The chain runs to 79 residues: Sec-independent protein translocase protein TatA (79 aa).

Residues 1–21 (MGGFTSIWHWVIVLLVIVLLF) traverse the membrane as a helical segment. Residues 54–79 (ELKTLDAQATQTKVHETSEIKSKQES) are disordered. Positions 66 to 79 (KVHETSEIKSKQES) are enriched in basic and acidic residues.

It belongs to the TatA/E family. The Tat system comprises two distinct complexes: a TatABC complex, containing multiple copies of TatA, TatB and TatC subunits, and a separate TatA complex, containing only TatA subunits. Substrates initially bind to the TatABC complex, which probably triggers association of the separate TatA complex to form the active translocon.

Its subcellular location is the cell inner membrane. Functionally, part of the twin-arginine translocation (Tat) system that transports large folded proteins containing a characteristic twin-arginine motif in their signal peptide across membranes. TatA could form the protein-conducting channel of the Tat system. This chain is Sec-independent protein translocase protein TatA, found in Helicobacter pylori (strain J99 / ATCC 700824) (Campylobacter pylori J99).